We begin with the raw amino-acid sequence, 303 residues long: Y-box-binding protein 1 (303 aa).

Residues 1–12 (MSSEVETQQQQP) show a composition bias toward polar residues. Residues 1–28 (MSSEVETQQQQPDALEGKAGQEPAATVG) are disordered. The CSD domain occupies 39 to 103 (GTVKWFNVRN…GEKGAEAANV (65 aa)). The C5-methylcytosine binding stretch occupies residues 43–48 (WFNVRN). Residues 98–303 (AEAANVTGPE…TPEAEQGGAE (206 aa)) form a disordered region. A compositionally biased stretch (basic residues) spans 122–132 (HYRRYPRRRGP). Low complexity-rich tracts occupy residues 133–143 (PRNYQQNYQNN) and 173–187 (PPYYSRRPYGRRPQY). 2 stretches are compositionally biased toward basic residues: residues 220-229 (FRPRFRRGPP) and 258-270 (RRYRRNFNYRRRR). The segment covering 271–284 (PENPKSQDGKETKA) has biased composition (basic and acidic residues).

It belongs to the YBX1 family.

Its subcellular location is the cytoplasm. The protein localises to the nucleus. The protein resides in the cytoplasmic granule. It localises to the secreted. It is found in the extracellular exosome. Its subcellular location is the P-body. Its function is as follows. DNA- and RNA-binding protein involved in various processes, such as translational repression, RNA stabilization, mRNA splicing and transcription regulation. Binds preferentially to the 5'-[CU]CUGCG-3' RNA motif and specifically recognizes mRNA transcripts modified by C5-methylcytosine (m5C). Promotes mRNA stabilization: acts by binding to m5C-containing mRNAs and preventing mRNA decay. Plays a role in the maternal-to-zygotic transition in early embryo by binding to m5C-containing maternal mRNAs and preventing their degradation. Also promotes maternal-to-zygotic transition in oocytes and embryos by promoting translation repression; molecular mechanisms governing translation repression are unknown. Plays a key role in RNA composition of extracellular exosomes by defining the sorting of small non-coding RNAs, such as tRNAs, Y RNAs, Vault RNAs and miRNAs. Probably sorts RNAs in exosomes by recognizing and binding C5-methylcytosine (m5C)-containing RNAs. Acts as a key effector of epidermal progenitors by preventing epidermal progenitor senescence: acts by regulating the translation of a senescence-associated subset of cytokine mRNAs, possibly by binding to m5C-containing mRNAs. Also involved in pre-mRNA alternative splicing regulation: binds to splice sites in pre-mRNA and regulates splice site selection. Also able to bind DNA and regulate transcription. Binds to promoters that contain a Y-box (5'-CTGATTGGCCAA-3'). Promotes separation of DNA strands that contain mismatches or are modified by cisplatin. Has endonucleolytic activity and can introduce nicks or breaks into double-stranded DNA, suggesting a role in DNA repair. The secreted form acts as an extracellular mitogen and stimulates cell migration and proliferation. In Xenopus laevis (African clawed frog), this protein is Y-box-binding protein 1.